A 225-amino-acid polypeptide reads, in one-letter code: 7-cyano-7-deazaguanine synthase (225 aa).

Residue 10-20 (FSGGQDSTTLA) coordinates ATP. The Zn(2+) site is built by Cys190, Cys205, Cys208, and Cys211.

It belongs to the QueC family. Zn(2+) serves as cofactor.

It carries out the reaction 7-carboxy-7-deazaguanine + NH4(+) + ATP = 7-cyano-7-deazaguanine + ADP + phosphate + H2O + H(+). Its pathway is purine metabolism; 7-cyano-7-deazaguanine biosynthesis. Functionally, catalyzes the ATP-dependent conversion of 7-carboxy-7-deazaguanine (CDG) to 7-cyano-7-deazaguanine (preQ(0)). The protein is 7-cyano-7-deazaguanine synthase of Helicobacter pylori (strain J99 / ATCC 700824) (Campylobacter pylori J99).